Consider the following 111-residue polypeptide: Prophage-derived-like uncharacterized protein YozM (111 aa).

A signal peptide spans Met1–Glu24.

In Bacillus subtilis (strain 168), this protein is Prophage-derived-like uncharacterized protein YozM (yozM).